A 265-amino-acid polypeptide reads, in one-letter code: Homeobox protein Nkx-6.3 (265 aa).

The segment at residues 139–198 (KKHTRPTFTGHQIFALEKTFEQTKYLAGPERARLAYSLGMTESQVKVWFQNRRTKWRKKS) is a DNA-binding region (homeobox). Positions 196 to 240 (KKSALEPSSSTPRAPGGAGAGAGGDRAPSENEDDEYNKPLDPDSD) are disordered.

It is found in the nucleus. In terms of biological role, putative transcription factor, which may be involved in patterning of central nervous system and pancreas. In Homo sapiens (Human), this protein is Homeobox protein Nkx-6.3 (NKX6-3).